A 671-amino-acid polypeptide reads, in one-letter code: DNA ligase (671 aa).

NAD(+)-binding positions include 32-36 (DVEYD), 81-82 (SL), and glutamate 114. Lysine 116 acts as the N6-AMP-lysine intermediate in catalysis. Residues arginine 137, glutamate 175, lysine 292, and lysine 316 each coordinate NAD(+). Residues cysteine 410, cysteine 413, cysteine 428, and cysteine 434 each contribute to the Zn(2+) site. In terms of domain architecture, BRCT spans 592–671 (EKNNYFSGKN…AEFYQILGIR (80 aa)).

Belongs to the NAD-dependent DNA ligase family. LigA subfamily. Mg(2+) is required as a cofactor. The cofactor is Mn(2+).

It carries out the reaction NAD(+) + (deoxyribonucleotide)n-3'-hydroxyl + 5'-phospho-(deoxyribonucleotide)m = (deoxyribonucleotide)n+m + AMP + beta-nicotinamide D-nucleotide.. Functionally, DNA ligase that catalyzes the formation of phosphodiester linkages between 5'-phosphoryl and 3'-hydroxyl groups in double-stranded DNA using NAD as a coenzyme and as the energy source for the reaction. It is essential for DNA replication and repair of damaged DNA. In Baumannia cicadellinicola subsp. Homalodisca coagulata, this protein is DNA ligase.